The chain runs to 224 residues: Zinc finger C4H2 domain-containing protein (224 aa).

The stretch at 12–97 (ENIKEIRNKT…NKLLESTRRL (86 aa)) forms a coiled coil. Disordered stretches follow at residues 166-185 (QAARKQDARQTATFRQQPPP) and 204-224 (PLCKAKSRSRNPKKPKRKPDE). Residues 189–206 (CLSCHQQIHRNAPICPLC) form a C4H2-type zinc finger. Positions 208–224 (AKSRSRNPKKPKRKPDE) are enriched in basic residues.

The protein resides in the nucleus. It localises to the cytoplasm. Its subcellular location is the postsynaptic cell membrane. Plays a role in GABAergic and V2 interneurons differentiation. Involved in motoneuron development and in neuromuscular junction formation. The polypeptide is Zinc finger C4H2 domain-containing protein (zc4h2) (Danio rerio (Zebrafish)).